Here is a 207-residue protein sequence, read N- to C-terminus: dTDP-4-dehydrorhamnose 3-epimerase (207 aa).

Residues R23, D28, Q47 to N49, and R59 contribute to the substrate site. Catalysis depends on H62, which acts as the Proton acceptor. Residues K72 and H119 each coordinate substrate. The Proton donor role is filled by Y132. Residues E143 and R167 each coordinate substrate.

The protein belongs to the dTDP-4-dehydrorhamnose 3,5-epimerase family.

It functions in the pathway antibiotic biosynthesis; novobiocin biosynthesis. In terms of biological role, dTDP-6-deoxy-D-xylo-4-hexulose 3-epimerase that acts together with NovU to catalyze the formation of dTDP-4-keto-6-deoxy-5-C-methyl-L-lyxo-hexose from dTDP-4-keto-6-deoxy-D-glucose in the novobiocin biosynthesis pathway, an aminocoumarin family antibiotic that targets bacterial DNA gyrases. This chain is dTDP-4-dehydrorhamnose 3-epimerase, found in Streptomyces niveus (Streptomyces spheroides).